We begin with the raw amino-acid sequence, 151 residues long: Chaperonin GroEL (151 aa).

41-45 contacts ATP; it reads DGTTT.

It belongs to the chaperonin (HSP60) family. As to quaternary structure, forms a cylinder of 14 subunits composed of two heptameric rings stacked back-to-back. Interacts with the co-chaperonin GroES.

It localises to the cytoplasm. The catalysed reaction is ATP + H2O + a folded polypeptide = ADP + phosphate + an unfolded polypeptide.. In terms of biological role, together with its co-chaperonin GroES, plays an essential role in assisting protein folding. The GroEL-GroES system forms a nano-cage that allows encapsulation of the non-native substrate proteins and provides a physical environment optimized to promote and accelerate protein folding. The protein is Chaperonin GroEL of Mycolicibacterium fortuitum (Mycobacterium fortuitum).